Consider the following 235-residue polypeptide: Small ribosomal subunit protein eS6 (235 aa).

Positions 190 to 212 (GFHPRERGERRRKSVRGRMIPDP) are disordered.

The protein belongs to the eukaryotic ribosomal protein eS6 family.

The sequence is that of Small ribosomal subunit protein eS6 from Aeropyrum pernix (strain ATCC 700893 / DSM 11879 / JCM 9820 / NBRC 100138 / K1).